Consider the following 291-residue polypeptide: ATP synthase gamma chain (291 aa).

Belongs to the ATPase gamma chain family. In terms of assembly, F-type ATPases have 2 components, CF(1) - the catalytic core - and CF(0) - the membrane proton channel. CF(1) has five subunits: alpha(3), beta(3), gamma(1), delta(1), epsilon(1). CF(0) has three main subunits: a, b and c.

It is found in the cell membrane. Produces ATP from ADP in the presence of a proton gradient across the membrane. The gamma chain is believed to be important in regulating ATPase activity and the flow of protons through the CF(0) complex. This is ATP synthase gamma chain from Lachnoclostridium phytofermentans (strain ATCC 700394 / DSM 18823 / ISDg) (Clostridium phytofermentans).